We begin with the raw amino-acid sequence, 142 residues long: Large ribosomal subunit protein uL11 (142 aa).

The protein belongs to the universal ribosomal protein uL11 family. Part of the ribosomal stalk of the 50S ribosomal subunit. Interacts with L10 and the large rRNA to form the base of the stalk. L10 forms an elongated spine to which L12 dimers bind in a sequential fashion forming a multimeric L10(L12)X complex. One or more lysine residues are methylated.

Forms part of the ribosomal stalk which helps the ribosome interact with GTP-bound translation factors. In Stenotrophomonas maltophilia (strain R551-3), this protein is Large ribosomal subunit protein uL11.